Here is a 1847-residue protein sequence, read N- to C-terminus: Replication factor C small subunit (1847 aa).

DOD-type homing endonuclease domains follow at residues 179–311 (WLGY…RFGI), 780–927 (MLGL…ISGI), and 1348–1508 (LLGF…EFEV).

This sequence belongs to the activator 1 small subunits family. RfcS subfamily. As to quaternary structure, heteromultimer composed of small subunits (RfcS) and large subunits (RfcL). Post-translationally, this protein undergoes a protein self splicing that involves a post-translational excision of the intervening region (intein) followed by peptide ligation.

Part of the RFC clamp loader complex which loads the PCNA sliding clamp onto DNA. The sequence is that of Replication factor C small subunit (rfcS) from Methanocaldococcus jannaschii (strain ATCC 43067 / DSM 2661 / JAL-1 / JCM 10045 / NBRC 100440) (Methanococcus jannaschii).